A 183-amino-acid chain; its full sequence is Probable transcription termination protein NusA (183 aa).

One can recognise a KH domain in the interval aspartate 32–lysine 98. The segment at arginine 149 to glutamate 183 is disordered. Positions valine 156 to glutamate 183 are enriched in basic and acidic residues.

It belongs to the NusA family.

The protein localises to the cytoplasm. Functionally, participates in transcription termination. This chain is Probable transcription termination protein NusA, found in Methanocaldococcus jannaschii (strain ATCC 43067 / DSM 2661 / JAL-1 / JCM 10045 / NBRC 100440) (Methanococcus jannaschii).